The chain runs to 385 residues: Mannitol-1-phosphate 5-dehydrogenase (385 aa).

3-14 (ALQFGAGNIGRG) provides a ligand contact to NAD(+).

It belongs to the mannitol dehydrogenase family.

The enzyme catalyses D-mannitol 1-phosphate + NAD(+) = beta-D-fructose 6-phosphate + NADH + H(+). This Buchnera aphidicola subsp. Acyrthosiphon pisum (strain 5A) protein is Mannitol-1-phosphate 5-dehydrogenase.